The primary structure comprises 699 residues: Elongation factor G (699 aa).

The region spanning Glu8 to Ile283 is the tr-type G domain. GTP-binding positions include Ala17–Thr24, Asp81–His85, and Asn135–Asp138.

Belongs to the TRAFAC class translation factor GTPase superfamily. Classic translation factor GTPase family. EF-G/EF-2 subfamily.

Its subcellular location is the cytoplasm. In terms of biological role, catalyzes the GTP-dependent ribosomal translocation step during translation elongation. During this step, the ribosome changes from the pre-translocational (PRE) to the post-translocational (POST) state as the newly formed A-site-bound peptidyl-tRNA and P-site-bound deacylated tRNA move to the P and E sites, respectively. Catalyzes the coordinated movement of the two tRNA molecules, the mRNA and conformational changes in the ribosome. This Rickettsia parkeri protein is Elongation factor G.